Reading from the N-terminus, the 323-residue chain is tRNA dimethylallyltransferase (323 aa).

Gly18–Thr25 provides a ligand contact to ATP. Thr20–Thr25 serves as a coordination point for substrate. Positions Asp44–Leu47 are interaction with substrate tRNA.

The protein belongs to the IPP transferase family. As to quaternary structure, monomer. The cofactor is Mg(2+).

The catalysed reaction is adenosine(37) in tRNA + dimethylallyl diphosphate = N(6)-dimethylallyladenosine(37) in tRNA + diphosphate. Its function is as follows. Catalyzes the transfer of a dimethylallyl group onto the adenine at position 37 in tRNAs that read codons beginning with uridine, leading to the formation of N6-(dimethylallyl)adenosine (i(6)A). The polypeptide is tRNA dimethylallyltransferase (Blochmanniella floridana).